We begin with the raw amino-acid sequence, 1010 residues long: Lethal(2) giant larvae protein homolog SRO77 (1010 aa).

WD repeat units follow at residues 47-80 (TVTT…VVFT), 87-122 (IKHM…TTVF), 127-163 (ITCI…KLKI), 182-215 (SIQW…KQHF), 240-275 (VIQS…IHAR), 299-364 (AIFK…QKLF), 372-407 (LINF…ETLI), 431-504 (VTTC…FEVN), 518-595 (KNIS…STVI), 602-637 (VSAI…FNEN), 649-700 (VSTV…DATK), 709-763 (GINS…THAL), 768-815 (IATS…KNLR), and 829-852 (SILE…SVLN). The interval 932–958 (SNAARKLPPGTEDHRYARPVRSSGRSN) is disordered.

Belongs to the WD repeat L(2)GL family. In terms of assembly, interacts with SEC9.

Its function is as follows. Acts as an allosteric regulator of polarized exocytosis by promoting the targeted fusion of vesicles with the plasma membrane. Involved in maintenance of ion homeostasis in cells exposed to NaCl stress. May be involved in the targeting of the myosin proteins to their intrinsic pathways. Multicopy suppressor of RHO3. May also participate in the maintenance of cell polarity and bud growth. In Saccharomyces cerevisiae (strain ATCC 204508 / S288c) (Baker's yeast), this protein is Lethal(2) giant larvae protein homolog SRO77 (SRO77).